We begin with the raw amino-acid sequence, 1305 residues long: Adenylate cyclase type 9 (1305 aa).

Topologically, residues 1–110 (MASPVNQQLL…CFPQTQRRFR (110 aa)) are cytoplasmic. The segment covering 46 to 55 (ISSSCSSGES) has biased composition (low complexity). Residues 46–71 (ISSSCSSGESGVKKTGGSGGARRQKK) are disordered. Residues 111-131 (YALMYLSVAGLLWSIYFSVHM) form a helical membrane-spanning segment. The Extracellular segment spans residues 132-134 (KTK). The chain crosses the membrane as a helical span at residues 135–155 (LVSHLVPTLCFLIVCLGFFFF). The Cytoplasmic segment spans residues 156 to 164 (TFTKSYARH). The chain crosses the membrane as a helical span at residues 165–185 (CTAISLLVTLLVFTLTLASQF). Topologically, residues 186 to 209 (QVLNPGLGSDSLSNLTSFSATGSS) are extracellular. A glycan (N-linked (GlcNAc...) asparagine) is linked at Asn199. Residues 210-229 (SCLSQVGSFSICVEVLLLLY) traverse the membrane as a helical segment. Residues 230–235 (TVMHLP) are Cytoplasmic-facing. Residues 236–253 (LYLSACLGVAYSILFETF) traverse the membrane as a helical segment. At 254–274 (GYHFRDESCFVLLVGRMAHWE) the chain is on the extracellular side. The chain crosses the membrane as a helical span at residues 275–295 (LLSKALLHVCIHAIGVHLFIM). The Cytoplasmic segment spans residues 296–778 (SEVRSRSTFL…VKTFASATFS (483 aa)). Residues 343-369 (QGDDESENSVKRHSASSPKSRKKKSSI) are disordered. The segment covering 353 to 368 (KRHSASSPKSRKKKSS) has biased composition (basic residues). The Mg(2+) site is built by Asp393, Ile394, and Asp437. Residues 393 to 398 (DIVGFT), 435 to 437 (LGD), and Arg481 contribute to the ATP site. 2 stretches are compositionally biased toward polar residues: residues 607 to 618 (SDSHTNCTQPET) and 670 to 680 (ESSTGDTLTNS). Positions 607–680 (SDSHTNCTQP…SSTGDTLTNS (74 aa)) are disordered. The helical transmembrane segment at 779–799 (SLQDVLLNYFIFVLLSVACLL) threads the bilayer. The Extracellular portion of the chain corresponds to 800 to 810 (KPGTNTVSPPT). The helical transmembrane segment at 811–831 (LALVLLSVCGLLGFLSLLVSV) threads the bilayer. Over 832-859 (RMAFYLEDMLLCTRRLLEIISGWVPRHF) the chain is Cytoplasmic. The chain crosses the membrane as a helical span at residues 860 to 880 (IGTVLVCLPAAVIFSYLSSDF). Over 881-883 (YTD) the chain is Extracellular. Residues 884 to 904 (IHYTMFLCSALLIPMVQYCNF) form a helical membrane-spanning segment. Residues 905-911 (CQLSSSA) lie on the Cytoplasmic side of the membrane. A helical membrane pass occupies residues 912–932 (LLLATITGATMLILIYLPLCP). Over 933 to 966 (QRPPLDPGTDIEANLSTSNSSYETLDNPRTELPF) the chain is Extracellular. Asn946 and Asn951 each carry an N-linked (GlcNAc...) asparagine glycan. The chain crosses the membrane as a helical span at residues 967-987 (TRLGQEIAVAYFLLLLLVWFL). The Cytoplasmic portion of the chain corresponds to 988–1305 (NREFDVSYRL…EERGRDGGAR (318 aa)). Residues Lys1099, 1176-1178 (DIW), 1183-1187 (NIASR), and Lys1223 each bind ATP. The tract at residues 1261–1305 (SIGRSPTDEISSLVTGGKGAVELGSGEAERKREKAEERGRDGGAR) is disordered. Over residues 1287–1305 (EAERKREKAEERGRDGGAR) the composition is skewed to basic and acidic residues.

The protein belongs to the adenylyl cyclase class-4/guanylyl cyclase family. Requires Mg(2+) as cofactor. Mn(2+) serves as cofactor. As to expression, detected in oocytes.

The protein resides in the cell membrane. The catalysed reaction is ATP = 3',5'-cyclic AMP + diphosphate. In terms of biological role, adenylyl cyclase that catalyzes the formation of the signaling molecule cAMP in response to activation of G protein-coupled receptors. This chain is Adenylate cyclase type 9 (adcy9), found in Xenopus laevis (African clawed frog).